Consider the following 93-residue polypeptide: Vacuolar ATPase assembly integral membrane protein VMA21 (93 aa).

The Cytoplasmic segment spans residues 1 to 21 (MSNRVSTGKMAMAPQESVQPA). Residues 22-42 (VLYKLVLFALLMAVVPIGTYF) traverse the membrane as a helical segment. Residues 43-54 (STLNYLWDGSTT) lie on the Lumenal side of the membrane. Residues 55 to 75 (FAAISAIAAANLILVGYVVVA) form a helical membrane-spanning segment. Over 76-93 (FREDAASRTGPLPEKKTS) the chain is Cytoplasmic. The Prevents secretion from ER signature appears at 90-93 (KKTS).

This sequence belongs to the VMA21 family.

It localises to the endoplasmic reticulum membrane. The protein resides in the endoplasmic reticulum-Golgi intermediate compartment membrane. The protein localises to the cytoplasmic vesicle. Its subcellular location is the COPII-coated vesicle membrane. Functionally, required for the assembly of the V0 complex of the vacuolar ATPase (V-ATPase) in the endoplasmic reticulum. The sequence is that of Vacuolar ATPase assembly integral membrane protein VMA21 from Cryptococcus neoformans var. neoformans serotype D (strain JEC21 / ATCC MYA-565) (Filobasidiella neoformans).